The following is a 356-amino-acid chain: Stomatin-like protein 2, mitochondrial (356 aa).

Residues 1-28 constitute a mitochondrion transit peptide; sequence MLARAARGTGALLLRGSLLASGRAPRRA. Residue Ser17 is modified to Phosphoserine; by PKC/PRKCZ. Tyr124 carries the post-translational modification Phosphotyrosine. Lys145 is subject to N6-acetyllysine; alternate. Lys145 bears the N6-succinyllysine; alternate mark. A coiled-coil region spans residues 215 to 252; that stretch reads INVAEGKKQAQILASEAEKAEQINQAAGEASAVLAKAK. The residue at position 233 (Lys233) is an N6-acetyllysine. A disordered region spans residues 321–356; that stretch reads KAPVPGTPDSLSSGSSRDVQGTDASLDEELDRVKMS. Phosphothreonine is present on Thr327. A compositionally biased stretch (polar residues) spans 329 to 343; sequence DSLSSGSSRDVQGTD. Position 330 is a phosphoserine (Ser330).

This sequence belongs to the band 7/mec-2 family. As to quaternary structure, forms homooligomers. Interacts with MFN2; may form heterooligomers. Interacts with CACNA2D2. Interacts with PHB1 and PHB2; recruits them to cardiolipin-enriched mitochondrial membranes and stabilizes them. Post-translationally, hyperphosphorylated at Ser-17 in some patients with monoclonal gammopathy of undetermined significance (MGUS), multiple myeloma (MM) and Waldenstrom macroglobulinemia due to impaired dephosphorylation by PP2A. In terms of tissue distribution, ubiquitously expressed at low levels. Expressed in lymphoid tissues (at protein level).

The protein resides in the cell membrane. Its subcellular location is the mitochondrion. The protein localises to the mitochondrion inner membrane. It is found in the mitochondrion intermembrane space. It localises to the membrane raft. The protein resides in the cytoplasm. Its subcellular location is the cytoskeleton. In terms of biological role, mitochondrial protein that probably regulates the biogenesis and the activity of mitochondria. Stimulates cardiolipin biosynthesis, binds cardiolipin-enriched membranes where it recruits and stabilizes some proteins including prohibitin and may therefore act in the organization of functional microdomains in mitochondrial membranes. Through regulation of the mitochondrial function may play a role into several biological processes including cell migration, cell proliferation, T-cell activation, calcium homeostasis and cellular response to stress. May play a role in calcium homeostasis through negative regulation of calcium efflux from mitochondria. Required for mitochondrial hyperfusion a pro-survival cellular response to stress which results in increased ATP production by mitochondria. May also regulate the organization of functional domains at the plasma membrane and play a role in T-cell activation through association with the T-cell receptor signaling complex and its regulation. The sequence is that of Stomatin-like protein 2, mitochondrial (STOML2) from Homo sapiens (Human).